The sequence spans 247 residues: Type III pantothenate kinase (247 aa).

6-13 (DVGNTSIY) is an ATP binding site. A substrate-binding site is contributed by 102–105 (GADL). Aspartate 104 serves as the catalytic Proton acceptor. A K(+)-binding site is contributed by aspartate 122. Threonine 125 serves as a coordination point for ATP. A substrate-binding site is contributed by threonine 176.

This sequence belongs to the type III pantothenate kinase family. As to quaternary structure, homodimer. It depends on NH4(+) as a cofactor. K(+) serves as cofactor.

The protein resides in the cytoplasm. It catalyses the reaction (R)-pantothenate + ATP = (R)-4'-phosphopantothenate + ADP + H(+). Its pathway is cofactor biosynthesis; coenzyme A biosynthesis; CoA from (R)-pantothenate: step 1/5. Functionally, catalyzes the phosphorylation of pantothenate (Pan), the first step in CoA biosynthesis. This is Type III pantothenate kinase from Acholeplasma laidlawii (strain PG-8A).